A 438-amino-acid polypeptide reads, in one-letter code: MELATRSQIPKEVADIFSAPSDDEEFVGFQDDVPMQNLSESCGSLDSRELEKQQNVCFRSKYFTEELRRIFKEDTDSEMEDFEGFTESELNMSSNPELMESELSDSDKAYPVMNDAEEDDEEEAAPRRGRSTRRSSFGLRVAFQFPTKKLARTPDKDSSHLLDSKTDLRRKKSSRQPKGKEDSASDAEDESRAESQENSDALLKRAMNIKENKAMLAQLLAELNSVPDFFPVRTPPSASRRRTPRRAFSEGQITRRMNPTRSARPPEKFALENFTFSATKLTEELYSFRRRKTISGGKCQTYRRHRISSFRSVKDITEEDLENIAITVRDKVYDKVLGNTCHQCRQKTIDTKTVCRNQSCGGVRGQFCGPCLRNRYGEDVRTALLDPKWTCPPCRGICNCSYCRRRDGRCATGILIHLAKFYGYDNVKEYLESLQKQL.

The Integrase domain-binding motif 1 (IBM1) signature appears at 9 to 33; the sequence is IPKEVADIFSAPSDDEEFVGFQDDV. A Phosphoserine modification is found at serine 21. Positions 56 to 115 are PSIP1-binding; it reads VCFRSKYFTEELRRIFKEDTDSEMEDFEGFTESELNMSSNPELMESELSDSDKAYPVMND. The short motif at 63–89 is the Integrase domain-binding motif 2 (IBM2) element; the sequence is FTEELRRIFKEDTDSEMEDFEGFTESE. Residues 74–199 form a disordered region; that stretch reads DTDSEMEDFE…ESRAESQENS (126 aa). Threonine 75 is subject to Phosphothreonine. The segment covering 75–86 has biased composition (acidic residues); that stretch reads TDSEMEDFEGFT. Phosphoserine is present on serine 77. Threonine 86 carries the post-translational modification Phosphothreonine. Phosphoserine is present on residues serine 101, serine 104, serine 135, serine 136, and serine 159. Residues 152–167 are compositionally biased toward basic and acidic residues; the sequence is RTPDKDSSHLLDSKTD. Basic residues predominate over residues 168 to 177; sequence LRRKKSSRQP. Phosphoserine is present on residues serine 183 and serine 185. An MYC-binding region spans residues 201-223; that stretch reads ALLKRAMNIKENKAMLAQLLAEL. Residues lysine 210 and lysine 213 each participate in a glycyl lysine isopeptide (Lys-Gly) (interchain with G-Cter in SUMO2) cross-link. Phosphoserine is present on serine 249.

As to quaternary structure, interacts with MYC. Interacts (via IBM motifs) with PSIP1 (via IBD domain); phosphorylation increases its affinity for PSIP1. In terms of processing, phosphorylation increases its interaction with PSIP1. In terms of tissue distribution, expressed in all tissues but not detected in total brain.

It is found in the cytoplasm. The protein resides in the nucleus. In terms of biological role, plays a role in transcriptional regulation as a repressor that inhibits monoamine oxidase A (MAOA) activity and gene expression by binding to the promoter. Plays an important oncogenic role in mediating the full transforming effect of MYC in medulloblastoma cells. Involved in apoptotic signaling pathways; May act downstream of P38-kinase and BCL-2, but upstream of CASP3/caspase-3 as well as CCND1/cyclin D1 and E2F1. The protein is Cell division cycle-associated 7-like protein (Cdca7l) of Mus musculus (Mouse).